Consider the following 237-residue polypeptide: Class B acid phosphatase (237 aa).

The N-terminal stretch at 1 to 23 (MKKITLALSAVCLLFTLNHSANA) is a signal peptide. Residue Asp69 is the Nucleophile of the active site. Asp69 and Asp71 together coordinate Mg(2+). Asp71 functions as the Proton donor in the catalytic mechanism. Residues 137 to 138 (TG) and Lys177 contribute to the substrate site. Asp192 contributes to the Mg(2+) binding site.

The protein belongs to the class B bacterial acid phosphatase family. In terms of assembly, homotetramer. Requires Mg(2+) as cofactor.

The protein localises to the periplasm. It catalyses the reaction a phosphate monoester + H2O = an alcohol + phosphate. Its activity is regulated as follows. Nucleosides, and particularly 2'-deoxyribonucleosides, are potent inhibitors of the phosphatase activity. The phosphatase activity is also inhibited by inorganic phosphate and EDTA in vitro. In terms of biological role, dephosphorylates several organic phosphate monoesters such as 3'-UMP, 5'-UMP and pNPP. Also has a phosphotransferase activity catalyzing the transfer of low-energy phosphate groups from organic phosphate monoesters to free hydroxyl groups of various organic compounds such as the 2'-, 3-, or 5'-hydroxyls of nucleosides and nucleotides. Also displays significant phosphomutase activity since it is able to catalyze the transfer of the phosphate group of 3'-AMP from the 3'-position both to the 2'- and 5'-positions. One of the physiological functions of the phosphohydrolytic activity of the enzyme is believed to be the scavenging of organic phosphate esters that otherwise cannot pass the cytoplasmic membrane. The polypeptide is Class B acid phosphatase (aphA) (Salmonella typhimurium (strain LT2 / SGSC1412 / ATCC 700720)).